The chain runs to 77 residues: MKTSVLLVILGIAAITVQCTASESVEQDSLRTFVDAVLGWNAEMASEARCGGWMAKCADSDDCCETFHCTRFNVCGK.

An N-terminal signal peptide occupies residues 1-21 (MKTSVLLVILGIAAITVQCTA). The propeptide occupies 22–49 (SESVEQDSLRTFVDAVLGWNAEMASEAR). 3 disulfides stabilise this stretch: cysteine 50/cysteine 64, cysteine 57/cysteine 69, and cysteine 63/cysteine 75. The residue at position 77 (lysine 77) is a Lysine amide.

It belongs to the neurotoxin 10 (Hwtx-1) family. 65 (Jztx-21) subfamily. In terms of tissue distribution, expressed by the venom gland.

It is found in the secreted. Functionally, probable ion channel inhibitor. The polypeptide is U14-theraphotoxin-Cg1a 1 (Chilobrachys guangxiensis (Chinese earth tiger tarantula)).